The sequence spans 1014 residues: Ephrin type-B receptor 6 (1014 aa).

Positions 1–32 (MATEGTTGSGSRVVAGMVCSLWLLVLGSSVLA) are cleaved as a signal peptide. Topologically, residues 33–591 (LEEVLLDTTG…LPEKLSLVIG (559 aa)) are extracellular. An Eph LBD domain is found at 34 to 232 (EEVLLDTTGE…FSYTCPSVLR (199 aa)). 2 consecutive Fibronectin type-III domains span residues 364–479 (PPSA…TSHE) and 480–575 (VPSA…TLPQ). Residue asparagine 473 is glycosylated (N-linked (GlcNAc...) asparagine). A helical transmembrane segment spans residues 592–612 (SILGALAFLLLAAITVLAVIF). The Cytoplasmic segment spans residues 613–1014 (QRKRRGTGYT…HLRQPGSVEV (402 aa)). One can recognise a Protein kinase domain in the interval 663-912 (IKIEEVIGAG…QLVAAFDKMI (250 aa)). 669–677 (IGAGSFGEV) is a binding site for ATP. One can recognise an SAM domain in the interval 941-1005 (PCLDSPQAWL…LHNIQLLQQH (65 aa)). The PDZ-binding signature appears at 1012-1014 (VEV).

This sequence belongs to the protein kinase superfamily. Tyr protein kinase family. Ephrin receptor subfamily. As to quaternary structure, interacts with CBL and EPHB1. Interacts with FYN; this interaction takes place in a ligand-independent manner. In terms of processing, ligand-binding increases phosphorylation on tyrosine residues. Phosphorylation on tyrosine residues is mediated by transphosphorylation by the catalytically active EPHB1 in a ligand-independent manner. Tyrosine phosphorylation of the receptor may act as a switch on the functional transition from cell adhesion/attraction to de-adhesion/repulsion. In terms of tissue distribution, high level in thymus, and brain. Very low levels of expression in kidney, lung, liver, bone marrow, skeletal muscle, spleen from 2 week old and adult mice, heart, testes and embryonic stem cells.

It is found in the cell membrane. Its subcellular location is the secreted. Kinase-defective receptor for members of the ephrin-B family. Binds to ephrin-B1 and ephrin-B2. Modulates cell adhesion and migration by exerting both positive and negative effects upon stimulation with ephrin-B2. Inhibits JNK activation, T-cell receptor-induced IL-2 secretion and CD25 expression upon stimulation with ephrin-B2. This chain is Ephrin type-B receptor 6 (Ephb6), found in Mus musculus (Mouse).